A 473-amino-acid chain; its full sequence is Ribulose bisphosphate carboxylase large chain (473 aa).

Asparagine 116 and threonine 166 together coordinate substrate. Lysine 168 functions as the Proton acceptor in the catalytic mechanism. Residue lysine 170 participates in substrate binding. Mg(2+) contacts are provided by lysine 194, aspartate 196, and glutamate 197. An N6-carboxylysine modification is found at lysine 194. Residue histidine 287 is the Proton acceptor of the active site. The substrate site is built by arginine 288, histidine 320, and serine 372.

This sequence belongs to the RuBisCO large chain family. Type I subfamily. As to quaternary structure, heterohexadecamer of 8 large chains and 8 small chains. Mg(2+) is required as a cofactor.

It catalyses the reaction 2 (2R)-3-phosphoglycerate + 2 H(+) = D-ribulose 1,5-bisphosphate + CO2 + H2O. The catalysed reaction is D-ribulose 1,5-bisphosphate + O2 = 2-phosphoglycolate + (2R)-3-phosphoglycerate + 2 H(+). In terms of biological role, ruBisCO catalyzes two reactions: the carboxylation of D-ribulose 1,5-bisphosphate, the primary event in carbon dioxide fixation, as well as the oxidative fragmentation of the pentose substrate. Both reactions occur simultaneously and in competition at the same active site. In Halorhodospira halophila (strain DSM 244 / SL1) (Ectothiorhodospira halophila (strain DSM 244 / SL1)), this protein is Ribulose bisphosphate carboxylase large chain.